Reading from the N-terminus, the 393-residue chain is NAD(P)H-quinone oxidoreductase subunit H, chloroplastic (393 aa).

The protein belongs to the complex I 49 kDa subunit family. In terms of assembly, NDH is composed of at least 16 different subunits, 5 of which are encoded in the nucleus.

Its subcellular location is the plastid. The protein resides in the chloroplast thylakoid membrane. The enzyme catalyses a plastoquinone + NADH + (n+1) H(+)(in) = a plastoquinol + NAD(+) + n H(+)(out). It carries out the reaction a plastoquinone + NADPH + (n+1) H(+)(in) = a plastoquinol + NADP(+) + n H(+)(out). Its function is as follows. NDH shuttles electrons from NAD(P)H:plastoquinone, via FMN and iron-sulfur (Fe-S) centers, to quinones in the photosynthetic chain and possibly in a chloroplast respiratory chain. The immediate electron acceptor for the enzyme in this species is believed to be plastoquinone. Couples the redox reaction to proton translocation, and thus conserves the redox energy in a proton gradient. In Phaseolus vulgaris (Kidney bean), this protein is NAD(P)H-quinone oxidoreductase subunit H, chloroplastic.